We begin with the raw amino-acid sequence, 297 residues long: MDDLHGRNGRMHIGVAQNPMHVQYEDHGLHHIDNENSMMDDHADGGMDEGVETDIPSHPGNSADNRGEVVDRGIENGDQLTLSFQGQVYVFDRVSPEKVQAVLLLLGGREVPHTLPTTLGSPHQNNRVLGLSGTPQRLSVPQRLASLLRFREKRKGRNFDKTIRYTVRKEVALRMQRKKGQFTSAKSSNDDSGSTGSDWGSNQSWAVEGTETQKPEVLCRHCGTSEKSTPMMRRGPDGPRTLCNACGLMWANKGTLRDLSKVPPPQTPQHLSLNKNEDANLEADQMMEVTGDISNTQ.

A Tify domain is found at 73–108 (GIENGDQLTLSFQGQVYVFDRVSPEKVQAVLLLLGG). In terms of domain architecture, CCT spans 143 to 185 (RLASLLRFREKRKGRNFDKTIRYTVRKEVALRMQRKKGQFTSA). Residues 178-203 (KKGQFTSAKSSNDDSGSTGSDWGSNQ) are disordered. Low complexity predominate over residues 190-201 (DDSGSTGSDWGS). The GATA-type zinc finger occupies 213–269 (QKPEVLCRHCGTSEKSTPMMRRGPDGPRTLCNACGLMWANKGTLRDLSKVPPPQTPQ).

It belongs to the type IV zinc-finger family. Class C subfamily. Predominantly expressed in shoot apices, inflorescences and roots.

It is found in the nucleus. Functionally, transcriptional activator that specifically binds 5'-GATA-3' or 5'-GAT-3' motifs within gene promoters. This chain is GATA transcription factor 24 (GATA24), found in Arabidopsis thaliana (Mouse-ear cress).